We begin with the raw amino-acid sequence, 341 residues long: Flagellar P-ring protein (341 aa).

Positions 1–19 (MKQVFLWLIFVLAFHKLLA) are cleaved as a signal peptide.

This sequence belongs to the FlgI family. In terms of assembly, the basal body constitutes a major portion of the flagellar organelle and consists of four rings (L,P,S, and M) mounted on a central rod.

The protein localises to the periplasm. The protein resides in the bacterial flagellum basal body. Its function is as follows. Assembles around the rod to form the L-ring and probably protects the motor/basal body from shearing forces during rotation. The polypeptide is Flagellar P-ring protein (Helicobacter acinonychis (strain Sheeba)).